We begin with the raw amino-acid sequence, 487 residues long: MRFHRQGISAIIGVLLIVLLGFCWKLSGSYGIVSTALPHNQSAIKSTDLPSIRWDNYHEFVRDIDFDNSTAIFNSIRAALRQSPSDIHPVGVSYFPAVIPKGTLMYHAGSKVPTTFEWLAMDHEFSYSFGLRSPSYGRKSLERRHGRFGNGTNGDHPKGPPPPPPPPDEKGRGSQKMLTYRAARDLNKFLYLDGASAAKTDSGEMDTQLMLSNVIKEKLNLTDDGENERMAERLYAARICKWGKPFGLDGIIRVEVGFEVVLCDFSADNVELVSMLEMVQPNQYLGLPAPTVISKEEGWPLDENGSLVEDQLTDDQKAILEREDGWEKAFSNFNAVKSFNQLRAGAAHDNGEHRIHIDYRYLVSGINRTYIAPDPNNRRLLDEGMTWEKQLDMVDDLEKALEVGFDATQSMDWQLAFDELVLKFAPLLKSVSNILNSDGDINESIAINATALTLNFCLPICEPIPGLKNGCRLFDLVICCQRCRRNC.

Residues 1–31 form the signal peptide; the sequence is MRFHRQGISAIIGVLLIVLLGFCWKLSGSYG. Asn-40, Asn-68, Asn-150, Asn-220, Asn-304, Asn-367, Asn-442, and Asn-448 each carry an N-linked (GlcNAc...) asparagine glycan. The interval 141-176 is disordered; sequence LERRHGRFGNGTNGDHPKGPPPPPPPPDEKGRGSQK.

N-glycosylated.

This is an uncharacterized protein from Saccharomyces cerevisiae (strain ATCC 204508 / S288c) (Baker's yeast).